The sequence spans 829 residues: Leucine--tRNA ligase (829 aa).

The short motif at 34–44 is the 'HIGH' region element; it reads PYPSGNIHMGH. Residues 591 to 595 carry the 'KMSKS' region motif; sequence KMSKS. Lys-594 lines the ATP pocket.

This sequence belongs to the class-I aminoacyl-tRNA synthetase family.

It is found in the cytoplasm. It carries out the reaction tRNA(Leu) + L-leucine + ATP = L-leucyl-tRNA(Leu) + AMP + diphosphate. The sequence is that of Leucine--tRNA ligase from Ehrlichia canis (strain Jake).